A 565-amino-acid polypeptide reads, in one-letter code: MSEHDVESNKKDDGFQSSVTVEMSKDPDSFHEETVEPKPELKEPEPKEPEPKEPERKEPERKEPERKEPERKEPERKVPGRRETQTKETQTTEIERKETKKKRGTNSYCPPQGTINKTITDGAALIALWTLLWALIGQEVLPGGNLFGLVVIFYSAFLGGKILEFIKIPVVPPLPPLIGMLLAGFTIRNVPIIYEFVHIPTTWSSALRNTALTIILVRAGLGLDPQALKHLKGVCLRLSFGPCFLEACSAALFSHFIMNFPWQWGFLLGFVLGAVSPAVVVPNMLMLQENGYGVEKGIPTLLVAASSMDDIVAITGFNTFLSIVFSSGSVISNILSSLRDVLIGVLVGIVMGVFVQYFPSGDQERLTQRRAFLVLSMCISAVLGCQHIGLHGSGGLVTLVLSFMAAKRWAEEKVGIQKIVANTWNVFQPLLFGLVGTEVSVESLESKTIGMCLATLGLALSVRILSTFVLMSFANFRFKEKVFIALSWIPKATVQAVLGPLALETARVMAPHLEGYAKAVMTVAFLAILITAPNGALLIGILGPKILEQSEVTFPLKVELSNFHH.

Composition is skewed to basic and acidic residues over residues 1-14 and 23-86; these read MSEHDVESNKKDDG and MSKD…ETQT. A disordered region spans residues 1 to 112; the sequence is MSEHDVESNK…RGTNSYCPPQ (112 aa). The next 13 helical transmembrane spans lie at 122–142, 146–166, 167–187, 206–223, 238–258, 266–286, 311–331, 341–361, 371–391, 419–439, 449–469, 482–502, and 523–543; these read GAALIALWTLLWALIGQEVLP, LFGLVVIFYSAFLGGKILEFI, KIPVVPPLPPLIGMLLAGFTI, ALRNTALTIILVRAGLGL, LSFGPCFLEACSAALFSHFIM, FLLGFVLGAVSPAVVVPNMLM, IVAITGFNTFLSIVFSSGSVI, VLIGVLVGIVMGVFVQYFPSG, AFLVLSMCISAVLGCQHIGLH, IVANTWNVFQPLLFGLVGTEV, IGMCLATLGLALSVRILSTFV, VFIALSWIPKATVQAVLGPLA, and VAFLAILITAPNGALLIGILG.

The protein belongs to the monovalent cation:proton antiporter 1 (CPA1) transporter (TC 2.A.36) family. As to expression, testis-specific. Expressed in the spermatids and spermatozoa (at protein level). Specifically present in the principal piece of sperm tail (at protein level).

It localises to the cell projection. Its subcellular location is the cilium. It is found in the flagellum membrane. In terms of biological role, sperm-specific Na(+)/H(+) exchanger involved in intracellular pH regulation of spermatozoa. Involved in sperm motility and fertility. The polypeptide is Sodium/hydrogen exchanger 9B1 (Mus musculus (Mouse)).